Here is a 604-residue protein sequence, read N- to C-terminus: Nuclear cap-binding protein subunit 3 (604 aa).

The interval 1–36 (MAAVRGLRISVKAEATATTAEPRGPEPEPMEVEEGE) is disordered. The RNA recognition motif (RRM) domain stretch occupies residues 116 to 177 (DTIYICGVDE…MSSFPDQEKP (62 aa)). The WLDD motif; essential for 7-methylguanosine-containing mRNA cap binding motif lies at 145–148 (WLDD). Disordered regions lie at residues 168–219 (MSSF…DIEL), 319–383 (KHRH…DSDE), and 457–604 (QNNN…DTES). Positions 173 to 198 (DQEKPKGGENNEEKTAEKNKKEKQEE) are enriched in basic and acidic residues. Acidic residues-rich tracts occupy residues 199–219 (STDD…DIEL) and 331–349 (EPIE…DEDD). The span at 350-370 (RVVVEYRDDLQPFKQSRDRGA) shows a compositional bias: basic and acidic residues. The segment covering 458-469 (NNNGLRQPNSIV) has biased composition (polar residues). Basic and acidic residues-rich tracts occupy residues 495–505 (PRREPISDVHS), 539–548 (TQEKTSDKPE), and 569–582 (IKEK…KSRL). Over residues 595–604 (ESSSGSDTES) the composition is skewed to low complexity.

It belongs to the NCBP3 family. In terms of assembly, component of an alternative cap-binding complex (CBC) composed of NCBP1/CBP80 and NCBP3.

Its subcellular location is the nucleus. It is found in the cytoplasm. Associates with NCBP1/CBP80 to form an alternative cap-binding complex (CBC) which plays a key role in mRNA export. NCBP3 serves as adapter protein linking the capped RNAs (m7GpppG-capped RNA) to NCBP1/CBP80. Unlike the conventional CBC with NCBP2 which binds both small nuclear RNA (snRNA) and messenger (mRNA) and is involved in their export from the nucleus, the alternative CBC with NCBP3 does not bind snRNA and associates only with mRNA thereby playing a role in only mRNA export. This chain is Nuclear cap-binding protein subunit 3, found in Gallus gallus (Chicken).